The chain runs to 776 residues: ADP-ribosylation factor GTPase-activating protein AGD2 (776 aa).

Positions 2 to 226 (AGFINLEDSP…IHQVLTYAQQ (225 aa)) constitute a BAR domain. The segment at 248 to 267 (QSELDSQQASAKADPSDVGG) is disordered. The PH domain occupies 290–421 (EVTKQGYLLK…WVNKITAAIT (132 aa)). Residues 467 to 604 (DDVLTILREI…ALVVKDEREA (138 aa)) form the Arf-GAP domain. A C4-type zinc finger spans residues 482–505 (CAECNAPDPDWASLNLGVLMCIEC). 2 ANK repeats span residues 683–712 (QGCSLLHVACQSGDPILLELLLQFGADINM) and 716–745 (HGRTPLHHCIASGNNAFAKVLLRRGARPSI).

In terms of tissue distribution, expressed in roots, hypocotyls, cotyledons, leaf and shoot apical meristems and siliques.

Probable GTPase-activating protein. This is ADP-ribosylation factor GTPase-activating protein AGD2 (AGD2) from Arabidopsis thaliana (Mouse-ear cress).